Consider the following 395-residue polypeptide: Digeranylgeranylglycerophospholipid reductase (395 aa).

Residues Ala-15, Asp-34, Cys-45, Ala-46, Ala-48, Arg-97, Ala-121, Asp-276, and Gly-288 each contribute to the FAD site. Arg-329 contacts a 2,3-bis-O-(geranylgeranyl)-sn-glycerol 1-phospholipid.

It belongs to the geranylgeranyl reductase family. DGGGPL reductase subfamily. FAD serves as cofactor.

It catalyses the reaction a 2,3-bis-O-phytanyl-sn-glycerol 1-phospholipid + 8 A = a 2,3-bis-O-(geranylgeranyl)-sn-glycerol 1-phospholipid + 8 AH2. The enzyme catalyses 2,3-bis-O-(phytanyl)-sn-glycerol 1-phosphate + 8 A = 2,3-bis-O-(geranylgeranyl)-sn-glycerol 1-phosphate + 8 AH2. It carries out the reaction CDP-2,3-bis-O-(geranylgeranyl)-sn-glycerol + 8 AH2 = CDP-2,3-bis-O-(phytanyl)-sn-glycerol + 8 A. The catalysed reaction is archaetidylserine + 8 AH2 = 2,3-bis-O-phytanyl-sn-glycero-3-phospho-L-serine + 8 A. The protein operates within membrane lipid metabolism; glycerophospholipid metabolism. Functionally, is involved in the reduction of 2,3-digeranylgeranylglycerophospholipids (unsaturated archaeols) into 2,3-diphytanylglycerophospholipids (saturated archaeols) in the biosynthesis of archaeal membrane lipids. Catalyzes the formation of archaetidic acid (2,3-di-O-phytanyl-sn-glyceryl phosphate) from 2,3-di-O-geranylgeranylglyceryl phosphate (DGGGP) via the hydrogenation of each double bond of the isoprenoid chains. Is also probably able to reduce double bonds of geranyl groups in CDP-2,3-bis-O-(geranylgeranyl)-sn-glycerol and archaetidylserine, thus acting at various stages in the biosynthesis of archaeal membrane lipids. In Thermococcus kodakarensis (strain ATCC BAA-918 / JCM 12380 / KOD1) (Pyrococcus kodakaraensis (strain KOD1)), this protein is Digeranylgeranylglycerophospholipid reductase.